The chain runs to 301 residues: MEGDFSVCRNCKRHVVSANFTLHEAYCLRFLVLCPECEEPVPKETMEEHCKLEHQQVGCTMCQQSMQKSSLEFHKANECQERPVECKFCKLDMQLSKLELHESYCGSRTELCQGCGQFIMHRMLAQHRDVCRSEQAQLGKGERISAPEREIYCHYCNQMIPENKYFHHMGKCCPDSEFKKHFPVGNPEILPSSLPSQAAENQTSTMEKDVRPKTRSINRFPLHSESSSKKAPRSKNKTLDPLLMSEPKPRTSSPRGDKAAYDILRRCSQCGILLPLPILNQHQEKCRWLASSKGKQVRNFS.

A TRAF-type zinc finger spans residues 22 to 99 (LHEAYCLRFL…KLDMQLSKLE (78 aa)). Positions 189–257 (ILPSSLPSQA…KPRTSSPRGD (69 aa)) are disordered. Residues 193–205 (SLPSQAAENQTST) show a composition bias toward polar residues.

Interacts with BIRC4; the interaction is not detected in. Interacts with BIRC1, BIRC2, BIRC3, BIRC7 and BIRC8. Part of an complex consisting of BIRC4, XAF1 and BIRC5; the complex formation requires IFN-beta stimulation. Interacts with RNF114, the interaction increases XAF1 stability and proapoptotic effects, and may regulate IFN signaling. As to expression, widely expressed. Expression is frequently down-regulated in cancer cell lines. Isoform 5 is widely expressed. Expressed in placenta (at protein level).

The protein resides in the cytoplasm. Its subcellular location is the nucleus. The protein localises to the mitochondrion. In terms of biological role, seems to function as a negative regulator of members of the IAP (inhibitor of apoptosis protein) family. Inhibits anti-caspase activity of BIRC4. Induces cleavage and inactivation of BIRC4 independent of caspase activation. Mediates TNF-alpha-induced apoptosis and is involved in apoptosis in trophoblast cells. May inhibit BIRC4 indirectly by activating the mitochondrial apoptosis pathway. After translocation to mitochondria, promotes translocation of BAX to mitochondria and cytochrome c release from mitochondria. Seems to promote the redistribution of BIRC4 from the cytoplasm to the nucleus, probably independent of BIRC4 inactivation which seems to occur in the cytoplasm. The BIRC4-XAF1 complex mediates down-regulation of BIRC5/survivin; the process requires the E3 ligase activity of BIRC4. Seems to be involved in cellular sensitivity to the proapoptotic actions of TRAIL. May be a tumor suppressor by mediating apoptosis resistance of cancer cells. The chain is XIAP-associated factor 1 (XAF1) from Homo sapiens (Human).